The chain runs to 842 residues: Elongation factor 2 (842 aa).

Positions 17–346 (ANVRNMSVIA…MIVLHLPSPV (330 aa)) constitute a tr-type G domain. GTP is bound by residues 26–33 (AHVDHGKS), 158–161 (NKVD), and 213–215 (SGL). Position 699 is a diphthamide (His-699).

It belongs to the TRAFAC class translation factor GTPase superfamily. Classic translation factor GTPase family. EF-G/EF-2 subfamily.

Its subcellular location is the cytoplasm. It carries out the reaction GTP + H2O = GDP + phosphate + H(+). Its pathway is protein biosynthesis; polypeptide chain elongation. Catalyzes the GTP-dependent ribosomal translocation step during translation elongation. During this step, the ribosome changes from the pre-translocational (PRE) to the post-translocational (POST) state as the newly formed A-site-bound peptidyl-tRNA and P-site-bound deacylated tRNA move to the P and E sites, respectively. Catalyzes the coordinated movement of the two tRNA molecules, the mRNA and conformational changes in the ribosome. This chain is Elongation factor 2 (EFT2), found in Meyerozyma guilliermondii (strain ATCC 6260 / CBS 566 / DSM 6381 / JCM 1539 / NBRC 10279 / NRRL Y-324) (Yeast).